Consider the following 397-residue polypeptide: Argininosuccinate synthase (397 aa).

9–17 (AYSGGLDTS) contacts ATP. Tyr87 is a binding site for L-citrulline. Gly117 contributes to the ATP binding site. 3 residues coordinate L-aspartate: Thr119, Asn123, and Asp124. Asn123 contributes to the L-citrulline binding site. L-citrulline is bound by residues Arg127, Ser175, Ser184, Glu257, and Tyr269.

The protein belongs to the argininosuccinate synthase family. Type 1 subfamily. Homotetramer.

It localises to the cytoplasm. The enzyme catalyses L-citrulline + L-aspartate + ATP = 2-(N(omega)-L-arginino)succinate + AMP + diphosphate + H(+). The protein operates within amino-acid biosynthesis; L-arginine biosynthesis; L-arginine from L-ornithine and carbamoyl phosphate: step 2/3. The sequence is that of Argininosuccinate synthase from Dictyoglomus thermophilum (strain ATCC 35947 / DSM 3960 / H-6-12).